Reading from the N-terminus, the 289-residue chain is NAD kinase (289 aa).

Asp68 acts as the Proton acceptor in catalysis. Residues 68–69 (DG), Lys73, 142–143 (ND), Arg153, Asp172, 183–188 (TAYSLS), and Gln243 contribute to the NAD(+) site.

The protein belongs to the NAD kinase family. Requires a divalent metal cation as cofactor.

It is found in the cytoplasm. The catalysed reaction is NAD(+) + ATP = ADP + NADP(+) + H(+). Functionally, involved in the regulation of the intracellular balance of NAD and NADP, and is a key enzyme in the biosynthesis of NADP. Catalyzes specifically the phosphorylation on 2'-hydroxyl of the adenosine moiety of NAD to yield NADP. The sequence is that of NAD kinase from Acetivibrio thermocellus (strain ATCC 27405 / DSM 1237 / JCM 9322 / NBRC 103400 / NCIMB 10682 / NRRL B-4536 / VPI 7372) (Clostridium thermocellum).